Here is a 368-residue protein sequence, read N- to C-terminus: tRNA 2-selenouridine synthase (368 aa).

The 124-residue stretch at Met15 to Asp138 folds into the Rhodanese domain. Cys98 functions as the S-selanylcysteine intermediate in the catalytic mechanism.

Belongs to the SelU family. In terms of assembly, monomer.

It catalyses the reaction 5-methylaminomethyl-2-thiouridine(34) in tRNA + selenophosphate + (2E)-geranyl diphosphate + H2O + H(+) = 5-methylaminomethyl-2-selenouridine(34) in tRNA + (2E)-thiogeraniol + phosphate + diphosphate. The catalysed reaction is 5-methylaminomethyl-2-thiouridine(34) in tRNA + (2E)-geranyl diphosphate = 5-methylaminomethyl-S-(2E)-geranyl-thiouridine(34) in tRNA + diphosphate. The enzyme catalyses 5-methylaminomethyl-S-(2E)-geranyl-thiouridine(34) in tRNA + selenophosphate + H(+) = 5-methylaminomethyl-2-(Se-phospho)selenouridine(34) in tRNA + (2E)-thiogeraniol. It carries out the reaction 5-methylaminomethyl-2-(Se-phospho)selenouridine(34) in tRNA + H2O = 5-methylaminomethyl-2-selenouridine(34) in tRNA + phosphate. In terms of biological role, involved in the post-transcriptional modification of the uridine at the wobble position (U34) of tRNA(Lys), tRNA(Glu) and tRNA(Gln). Catalyzes the conversion of 2-thiouridine (S2U-RNA) to 2-selenouridine (Se2U-RNA). Acts in a two-step process involving geranylation of 2-thiouridine (S2U) to S-geranyl-2-thiouridine (geS2U) and subsequent selenation of the latter derivative to 2-selenouridine (Se2U) in the tRNA chain. The protein is tRNA 2-selenouridine synthase of Shewanella woodyi (strain ATCC 51908 / MS32).